The following is a 257-amino-acid chain: Enolase-phosphatase E1 (257 aa).

Positions 16 and 18 each coordinate Mg(2+). Residues 150 to 151 (SS) and Lys184 contribute to the substrate site. Asp209 contacts Mg(2+).

It belongs to the HAD-like hydrolase superfamily. MasA/MtnC family. In terms of assembly, monomer. It depends on Mg(2+) as a cofactor.

The protein resides in the cytoplasm. The protein localises to the nucleus. It catalyses the reaction 5-methylsulfanyl-2,3-dioxopentyl phosphate + H2O = 1,2-dihydroxy-5-(methylsulfanyl)pent-1-en-3-one + phosphate. It participates in amino-acid biosynthesis; L-methionine biosynthesis via salvage pathway; L-methionine from S-methyl-5-thio-alpha-D-ribose 1-phosphate: step 3/6. Its pathway is amino-acid biosynthesis; L-methionine biosynthesis via salvage pathway; L-methionine from S-methyl-5-thio-alpha-D-ribose 1-phosphate: step 4/6. Its function is as follows. Bifunctional enzyme that catalyzes the enolization of 2,3-diketo-5-methylthiopentyl-1-phosphate (DK-MTP-1-P) into the intermediate 2-hydroxy-3-keto-5-methylthiopentenyl-1-phosphate (HK-MTPenyl-1-P), which is then dephosphorylated to form the acireductone 1,2-dihydroxy-3-keto-5-methylthiopentene (DHK-MTPene). This Mus musculus (Mouse) protein is Enolase-phosphatase E1 (Enoph1).